A 619-amino-acid chain; its full sequence is Dynein axonemal intermediate chain 2 (619 aa).

5 WD repeats span residues 214 to 254 (KPSS…LVAE), 261 to 302 (SHRD…EPTE), 362 to 401 (GHHG…SSIM), 405 to 445 (YHMA…CDPA), and 450 to 489 (VCDD…STLQ). The interval 566 to 619 (EALKKKPKPKKASIEVEGEDELEDIAGEEEESGIIMGEDTGEDDMDEKNEGGAP) is disordered. Residues 581 to 597 (VEGEDELEDIAGEEEES) are compositionally biased toward acidic residues.

Belongs to the dynein intermediate chain family. In terms of assembly, consists of at least two heavy chains and a number of intermediate and light chains. Interacts with DNAAF2. Interacts with DNAAF6/PIH1D3. Interacts with HEATR2; probably involved in outer arm dynein assembly. Interacts with CFAP53.

Its subcellular location is the cytoplasm. The protein localises to the cytoskeleton. The protein resides in the cilium axoneme. It localises to the dynein axonemal particle. Part of the dynein complex of respiratory cilia. The polypeptide is Dynein axonemal intermediate chain 2 (Dnai2) (Rattus norvegicus (Rat)).